Consider the following 492-residue polypeptide: Steroid 21-hydroxylase (492 aa).

Heme b contacts are provided by arginine 91 and lysine 120. Arginine 231 lines the 17alpha-hydroxyprogesterone pocket. Arginine 231 lines the progesterone pocket. Residues histidine 363, arginine 424, and cysteine 426 each coordinate heme b.

Belongs to the cytochrome P450 family. The cofactor is heme b.

It is found in the endoplasmic reticulum membrane. The protein localises to the microsome membrane. The catalysed reaction is 17alpha-hydroxyprogesterone + reduced [NADPH--hemoprotein reductase] + O2 = 11-deoxycortisol + oxidized [NADPH--hemoprotein reductase] + H2O + H(+). It catalyses the reaction progesterone + reduced [NADPH--hemoprotein reductase] + O2 = 21-hydroxyprogesterone + oxidized [NADPH--hemoprotein reductase] + H2O + H(+). Its function is as follows. Specifically catalyzes the 21-hydroxylation of steroids. Required for the adrenal synthesis of mineralocorticoids and glucocorticoids. In Felis catus (Cat), this protein is Steroid 21-hydroxylase (CYP21).